The primary structure comprises 831 residues: Periplasmic nitrate reductase (831 aa).

Residues 1–29 (MTLSRRDFIKQTAVAATASVAGVTLPAGA) constitute a signal peptide (tat-type signal). One can recognise a 4Fe-4S Mo/W bis-MGD-type domain in the interval 41–97 (LKWSKAPCRFCGTGCGVTVAVRDNKVVATNGDPQAEVNKGLNCVKGYFLSKIMYGQD). The [4Fe-4S] cluster site is built by C48, C51, C55, and C83. Mo-bis(molybdopterin guanine dinucleotide) contacts are provided by residues K85, Q152, N177, C181, 214–221 (WGSNMAEM), 245–249 (STFTH), 264–266 (QTD), M375, Q379, N485, 511–512 (SD), K534, D561, and 721–730 (TGRVLEHWHS). W797 lines the substrate pocket. 2 residues coordinate Mo-bis(molybdopterin guanine dinucleotide): N805 and K822.

Belongs to the prokaryotic molybdopterin-containing oxidoreductase family. NasA/NapA/NarB subfamily. As to quaternary structure, component of the periplasmic nitrate reductase NapAB complex composed of NapA and NapB. The cofactor is [4Fe-4S] cluster. Requires Mo-bis(molybdopterin guanine dinucleotide) as cofactor. Post-translationally, predicted to be exported by the Tat system. The position of the signal peptide cleavage has not been experimentally proven.

Its subcellular location is the periplasm. It catalyses the reaction 2 Fe(II)-[cytochrome] + nitrate + 2 H(+) = 2 Fe(III)-[cytochrome] + nitrite + H2O. In terms of biological role, catalytic subunit of the periplasmic nitrate reductase complex NapAB. Receives electrons from NapB and catalyzes the reduction of nitrate to nitrite. This is Periplasmic nitrate reductase from Cupriavidus taiwanensis (strain DSM 17343 / BCRC 17206 / CCUG 44338 / CIP 107171 / LMG 19424 / R1) (Ralstonia taiwanensis (strain LMG 19424)).